A 335-amino-acid chain; its full sequence is MAGRRSSNVCPFPGNSGGGLEGPVPMRVDTPTWLSSQAATSRLMVRPGMGPGFCPGPEVWGVPLGPSPYEFRGGIAPYGAYETRTWSQNSSEDTYPGPYIALRYMPNLALPEDVSAIQKEMEQLAKELRQKRMTLGYSQADVGFAVGAMFGKVLSQTTICRFEAQQLSLANMWKLRPLLKMWLEEVDEKNLLGICRMEMILQQARKRRRASRERRIGSNLEKLFLQCPEPTPQQISYIAGRLRLQKDLVQVWFSNRSQMAGWPTNDSSQRENVGATGAPFPGPPVCFPLAPGLHFDFPHYGGSCLTPLYSSTPFPVRGALLSAPTTTLGLPRLSS.

Residues 1–23 are disordered; that stretch reads MAGRRSSNVCPFPGNSGGGLEGP. The POU-specific domain occupies 113–187; it reads DVSAIQKEME…LLKMWLEEVD (75 aa). The homeobox DNA-binding region spans 205-264; the sequence is RKRRRASRERRIGSNLEKLFLQCPEPTPQQISYIAGRLRLQKDLVQVWFSNRSQMAGWPT.

This sequence belongs to the POU transcription factor family. Class-5 subfamily. Highly restricted to adult testis.

The protein resides in the nucleus. Transcription factor that binds preferentially to the octamer motif (5'-ATGTTAAT-3'). May exert a regulatory function in meiotic events that are required for terminal differentiation of male germ cell. The protein is POU domain, class 5, transcription factor 2 (Pou5f2) of Rattus norvegicus (Rat).